We begin with the raw amino-acid sequence, 824 residues long: uncharacterized protein (824 aa).

This is an uncharacterized protein from Caenorhabditis elegans.